A 300-amino-acid polypeptide reads, in one-letter code: tRNA dimethylallyltransferase (300 aa).

9-16 (GPTASGKT) lines the ATP pocket. Position 11 to 16 (11 to 16 (TASGKT)) interacts with substrate. The segment at 34–37 (DSQQ) is interaction with substrate tRNA.

It belongs to the IPP transferase family. In terms of assembly, monomer. The cofactor is Mg(2+).

It carries out the reaction adenosine(37) in tRNA + dimethylallyl diphosphate = N(6)-dimethylallyladenosine(37) in tRNA + diphosphate. Catalyzes the transfer of a dimethylallyl group onto the adenine at position 37 in tRNAs that read codons beginning with uridine, leading to the formation of N6-(dimethylallyl)adenosine (i(6)A). This is tRNA dimethylallyltransferase from Anaeromyxobacter sp. (strain Fw109-5).